A 551-amino-acid polypeptide reads, in one-letter code: Serendipity locus protein alpha (551 aa).

Its subcellular location is the cytoplasm. It is found in the cell membrane. Functionally, required for the cellularization of the syncytial blastoderm embryo. Involved in the localization of the actin filaments just prior to and during plasma membrane invagination. Sry-alpha together with nullo and bnk may provide auxiliary functions, by acting both to stabilize a large and dynamic microfilament structure and regulate its functions. This Drosophila pseudoobscura pseudoobscura (Fruit fly) protein is Serendipity locus protein alpha (Sry-alpha).